Reading from the N-terminus, the 173-residue chain is MTTIRRFVCDDLFKFNNINLDYLTETYYLPFYLQYLSKWPSLLSMAEDVNGKPMGYMIGKAEGEGINWHGHVTAVSVAPEFRRIGLADRLMHILEEGSEKIYDGYFVDLFVRKSNTLAINMYTKFGYSVYRTVIGYYSGDEDALDMRKALPRDVEKKSIIPLKHPVYPTDADL.

Residues Thr-2–Pro-151 form the N-acetyltransferase domain.

It belongs to the acetyltransferase family. ARD1 subfamily.

Its function is as follows. Seems to be involved in N-acetylation. The polypeptide is N-alpha-acetyltransferase 20 (nat5) (Dictyostelium discoideum (Social amoeba)).